The chain runs to 294 residues: Phosphatidylglycerol--prolipoprotein diacylglyceryl transferase (294 aa).

The next 7 membrane-spanning stretches (helical) occupy residues 19 to 39, 69 to 89, 101 to 121, 139 to 159, 195 to 215, 224 to 244, and 267 to 287; these read VFGFDLALRWYALAYIVGIVL, LLTWVIVGVILGGRLGYVFFY, ILAVWQGGMAFHGGLLGVIAA, IMALGVPPGLLLGRIANFINA, QLYEAGLEGLILGALLIWLVW, GYVAGVFFAGYGVSRFFVEFF, and WGLTMGQCLSLPMILLGIWLI. Arg152 provides a ligand contact to a 1,2-diacyl-sn-glycero-3-phospho-(1'-sn-glycerol).

This sequence belongs to the Lgt family.

The protein localises to the cell inner membrane. The catalysed reaction is L-cysteinyl-[prolipoprotein] + a 1,2-diacyl-sn-glycero-3-phospho-(1'-sn-glycerol) = an S-1,2-diacyl-sn-glyceryl-L-cysteinyl-[prolipoprotein] + sn-glycerol 1-phosphate + H(+). Its pathway is protein modification; lipoprotein biosynthesis (diacylglyceryl transfer). Functionally, catalyzes the transfer of the diacylglyceryl group from phosphatidylglycerol to the sulfhydryl group of the N-terminal cysteine of a prolipoprotein, the first step in the formation of mature lipoproteins. The chain is Phosphatidylglycerol--prolipoprotein diacylglyceryl transferase from Roseobacter denitrificans (strain ATCC 33942 / OCh 114) (Erythrobacter sp. (strain OCh 114)).